The chain runs to 890 residues: Kinesin-like protein KIF20A (890 aa).

Residue Ser-2 is modified to N-acetylserine. Ser-7, Ser-14, and Ser-21 each carry phosphoserine. Residues 64–507 form the Kinesin motor domain; the sequence is KVKVYLRVRP…AKFSAIASQL (444 aa). 160 to 167 is a binding site for ATP; it reads GVTNSGKT. A Phosphoserine; by PLK1 modification is found at Ser-528. Residues Ser-532, Ser-662, Ser-668, Ser-685, and Ser-825 each carry the phosphoserine modification. Residues 611 to 762 adopt a coiled-coil conformation; sequence LDTQKELLEE…ESLQSAERAC (152 aa). A globular region spans residues 763–890; it reads CHSTGAGKLR…LKSGPFGKKY (128 aa). The tract at residues 832 to 865 is disordered; it reads TNQENQQPNQQPPGKKPFLRNLLPRTPTCQSSTD. Position 857 is a phosphothreonine (Thr-857). Residues Ser-867, Ser-878, and Ser-883 each carry the phosphoserine modification.

It belongs to the TRAFAC class myosin-kinesin ATPase superfamily. Kinesin family. In terms of processing, phosphorylated by PLK1 at Ser-528 during mitosis, creating a docking site for PLK1 and recruiting PLK1 at central spindle.

The protein localises to the golgi apparatus. It is found in the cytoplasm. The protein resides in the cytoskeleton. Its subcellular location is the spindle. In terms of biological role, mitotic kinesin required for chromosome passenger complex (CPC)-mediated cytokinesis. Following phosphorylation by PLK1, involved in recruitment of PLK1 to the central spindle. Interacts with guanosine triphosphate (GTP)-bound forms of RAB6A and RAB6B. May act as a motor required for the retrograde RAB6 regulated transport of Golgi membranes and associated vesicles along microtubules. Has a microtubule plus end-directed motility. The protein is Kinesin-like protein KIF20A (KIF20A) of Homo sapiens (Human).